The primary structure comprises 251 residues: Blue-light absorbing proteorhodopsin (251 aa).

Residues 1–18 (MGKLLLILGSAIALPSFA) form the signal peptide. The next 7 membrane-spanning stretches (helical) occupy residues 30–50 (VGVS…FFFV), 65–85 (VSGL…GVWI), 97–117 (IDWL…LAAC), 120–140 (VAAS…GAGF), 144–164 (AGLA…LYMI), 190–210 (MMMI…AGYL), and 223–243 (LIYN…IWNV). Lysine 233 carries the N6-(retinylidene)lysine modification.

This sequence belongs to the archaeal/bacterial/fungal opsin family. In terms of processing, contains one covalently linked retinal chromophore.

It is found in the cell membrane. Its function is as follows. Light-driven proton pump. May have a regulatory rather than energy harvesting function, based on light-induced opening of proton channels, to modulate cell physiology depending on light intensity variations. Could be, therefore, a sensory rhodopsin, potentially associated with a transducer component. The chain is Blue-light absorbing proteorhodopsin from Gamma-proteobacterium Hot 75m4.